The primary structure comprises 503 residues: 3-octaprenyl-4-hydroxybenzoate carboxy-lyase (503 aa).

Asparagine 176 contacts Mn(2+). Residues isoleucine 179–arginine 181, arginine 193–leucine 195, and arginine 198–glycine 199 contribute to the prenylated FMN site. A Mn(2+)-binding site is contributed by glutamate 242. Aspartate 303 (proton donor) is an active-site residue.

The protein belongs to the UbiD family. Homohexamer. The cofactor is prenylated FMN. It depends on Mn(2+) as a cofactor.

It localises to the cell membrane. The catalysed reaction is a 4-hydroxy-3-(all-trans-polyprenyl)benzoate + H(+) = a 2-(all-trans-polyprenyl)phenol + CO2. Its pathway is cofactor biosynthesis; ubiquinone biosynthesis. Its function is as follows. Catalyzes the decarboxylation of 3-octaprenyl-4-hydroxy benzoate to 2-octaprenylphenol, an intermediate step in ubiquinone biosynthesis. The chain is 3-octaprenyl-4-hydroxybenzoate carboxy-lyase from Ralstonia nicotianae (strain ATCC BAA-1114 / GMI1000) (Ralstonia solanacearum).